Reading from the N-terminus, the 378-residue chain is Formate dehydrogenase 2, mitochondrial (378 aa).

A mitochondrion-targeting transit peptide spans 1-18 (MAMWRAPSAAGQLLGRAL). The substrate site is built by valine 122 and asparagine 146. Residues threonine 147, 201 to 202 (RI), aspartate 221, 256 to 260 (PLTEK), asparagine 282, aspartate 308, and 332 to 335 (HCSG) each bind NAD(+).

The protein belongs to the D-isomer specific 2-hydroxyacid dehydrogenase family. FDH subfamily. As to quaternary structure, homodimer.

Its subcellular location is the mitochondrion. The catalysed reaction is formate + NAD(+) = CO2 + NADH. Catalyzes the NAD(+)-dependent oxidation of formate to carbon dioxide. Involved in the cell stress response. This chain is Formate dehydrogenase 2, mitochondrial, found in Oryza sativa subsp. japonica (Rice).